The sequence spans 1047 residues: UPF0182 protein Mlut_14990 (1047 aa).

Gly residues-rich tracts occupy residues 1–27 (MSFG…GQSG) and 49–59 (GPGGPFGGGGS). Positions 1 to 66 (MSFGQGGGGP…GGSSAARGRG (66 aa)) are disordered. A run of 7 helical transmembrane segments spans residues 71-91 (PSAL…FVVF), 114-134 (VLAK…AVWL), 168-188 (LVFL…AMNG), 214-234 (FFMA…SVVL), 266-286 (AHIG…FWLN), 314-334 (AILA…VVSG), and 341-361 (IGTA…PFIV). 3 disordered regions span residues 544–568 (GAPA…TFSG), 941–965 (GDSG…PTAP), and 1007–1047 (EALK…TPSG). A compositionally biased stretch (polar residues) spans 555–565 (TADSQEDTAYT). Residues 1015–1037 (ADDALGGDAPAQEQAPAEASPAP) are compositionally biased toward low complexity. A compositionally biased stretch (pro residues) spans 1038 to 1047 (SSSPSPTPSG).

Belongs to the UPF0182 family.

The protein resides in the cell membrane. This is UPF0182 protein Mlut_14990 from Micrococcus luteus (strain ATCC 4698 / DSM 20030 / JCM 1464 / CCM 169 / CCUG 5858 / IAM 1056 / NBRC 3333 / NCIMB 9278 / NCTC 2665 / VKM Ac-2230) (Micrococcus lysodeikticus).